We begin with the raw amino-acid sequence, 465 residues long: MRPQELPRLAFPLLLLLLLPPPPCPAHSATRFDPTWESLDARQLPAWFDQAKFGIFIHWGVFSVPSFGSEWFWWYWQKEKIPKYVEFMKDNYPPSFKYEDFGPLFTAKFFNANQWADIFQASGAKYIVLTSKHHKGFTLWGSEYSWNWNAIDEGPKRDIVKELEVAIRNRTDLRFGLYYSLFEWFHPLFLEDESSSFHKRQFPVSKTLPELYELVNNYQPEVLWSDGDGGAPDQYWNSTGFLAWLYNESPVRETVVTNDRWGAGSIYKHGGFYTCSDRYNPGHLLPHKWENCMTIDKLSWGYRREAGISDYLTIEELVKQLVETVSCGGNLLMNIGPTLDGTISVVFEERLRQMGSWLKVNGEAIYETHTWQSQNDTVTPDVWYTSKPKEKLVYAIFLKWPTSGQLFLGQPKAILGATEVKLLGHGQPLNWISLERNGIMVELPQLTIHQMPCKWGWALALTNVI.

Positions 1–26 (MRPQELPRLAFPLLLLLLLPPPPCPA) are cleaved as a signal peptide. N-linked (GlcNAc...) asparagine glycans are attached at residues N169 and N237. Position 299 is a phosphoserine (S299). N375 carries N-linked (GlcNAc...) asparagine glycosylation.

This sequence belongs to the glycosyl hydrolase 29 family. Homotetramer.

The protein localises to the secreted. The catalysed reaction is an alpha-L-fucoside + H2O = L-fucose + an alcohol. Functionally, alpha-L-fucosidase is responsible for hydrolyzing the alpha-1,6-linked fucose joined to the reducing-end N-acetylglucosamine of the carbohydrate moieties of glycoproteins. The protein is Plasma alpha-L-fucosidase (FUCA2) of Pongo abelii (Sumatran orangutan).